The primary structure comprises 198 residues: Protein RD3-like (198 aa).

The stretch at 28–57 (KTLLRELKWHLKERERLIQEIENEQKVKKT) forms a coiled coil. The tract at residues 133 to 168 (GSEQEDLEDSGSMDCSAPSVIQGDSSKRADKDEIPT) is disordered. Basic and acidic residues predominate over residues 157–166 (SSKRADKDEI).

This is Protein RD3-like (RD3L) from Homo sapiens (Human).